Reading from the N-terminus, the 236-residue chain is H2HPP isomerase (236 aa).

Cupin type-1 domains lie at 40-106 and 151-215; these read YVPP…AIDI and NIPG…SKSV. A divalent metal cation contacts are provided by His50, His52, Gln56, His91, His162, His164, Gln168, and His202. A substrate-binding site is contributed by Tyr223.

In terms of assembly, monomer. The cofactor is Fe(2+). It depends on Co(2+) as a cofactor.

The protein localises to the cytoplasm. The enzyme catalyses 3-[(4R)-4-hydroxycyclohexa-1,5-dien-1-yl]-2-oxopropanoate = 3-[(1E,4R)-4-hydroxycyclohex-2-en-1-ylidene]pyruvate. Its pathway is antibiotic biosynthesis; bacilysin biosynthesis. Functionally, part of the bacABCDEF operon responsible for the biosynthesis of the nonribosomally synthesized dipeptide antibiotic bacilysin, composed of L-alanine and L-anticapsin. Bacilysin is an irreversible inactivator of the glutaminase domain of glucosamine synthetase. BacB catalyzes the allylic isomerization of the endocyclic-delta(4),delta(8)-7R-dihydro-hydroxyphenylpyruvate (en-H2HPP) to generate a mixture of 3E,7R- and 3Z, 7R-olefins of the exocyclic-delta(3),delta(5)-dihydro-hydroxyphenylpyruvate (ex-H2HPP). This Bacillus subtilis protein is H2HPP isomerase.